The chain runs to 356 residues: Tyrosine recombinase XerS (356 aa).

Positions 16 to 121 (VMPPYVLEYY…ALSSLYKYLT (106 aa)) constitute a Core-binding (CB) domain. One can recognise a Tyr recombinase domain in the interval 169–354 (GFLDYIDSEY…INEEQKNALD (186 aa)). Residues Arg210, Lys234, His306, Arg309, and His332 contribute to the active site. The O-(3'-phospho-DNA)-tyrosine intermediate role is filled by Tyr341.

It belongs to the 'phage' integrase family. XerS subfamily.

It is found in the cytoplasm. FtsK is required for recombination. Site-specific tyrosine recombinase, which acts by catalyzing the cutting and rejoining of the recombining DNA molecules. Essential to convert dimers of the bacterial chromosome into monomers to permit their segregation at cell division. The sequence is that of Tyrosine recombinase XerS from Lactococcus lactis subsp. cremoris (strain SK11).